The sequence spans 167 residues: General odorant-binding protein 1 (167 aa).

The signal sequence occupies residues 1–22 (MAHTLQTVVLLLGTSILHPILA). Disulfide bonds link cysteine 41/cysteine 76, cysteine 72/cysteine 130, and cysteine 119/cysteine 139.

The protein belongs to the PBP/GOBP family. As to expression, antenna.

Present in the aqueous fluid surrounding olfactory sensory dendrites and are thought to aid in the capture and transport of hydrophobic odorants into and through this fluid. This is General odorant-binding protein 1 from Antheraea pernyi (Chinese oak silk moth).